Consider the following 477-residue polypeptide: Histidine--tRNA ligase (477 aa).

The protein belongs to the class-II aminoacyl-tRNA synthetase family. As to quaternary structure, homodimer.

The protein localises to the cytoplasm. The catalysed reaction is tRNA(His) + L-histidine + ATP = L-histidyl-tRNA(His) + AMP + diphosphate + H(+). The chain is Histidine--tRNA ligase (hisS) from Xanthomonas campestris pv. campestris (strain ATCC 33913 / DSM 3586 / NCPPB 528 / LMG 568 / P 25).